A 454-amino-acid chain; its full sequence is UPF0210 protein BL1209 (454 aa).

Belongs to the UPF0210 family. As to quaternary structure, homodimer.

This chain is UPF0210 protein BL1209, found in Bifidobacterium longum (strain NCC 2705).